The primary structure comprises 265 residues: Phosphonates import ATP-binding protein PhnC 1 (265 aa).

One can recognise an ABC transporter domain in the interval Leu-3 to Gln-247. Position 36–43 (Gly-36–Thr-43) interacts with ATP.

It belongs to the ABC transporter superfamily. Phosphonates importer (TC 3.A.1.9.1) family. As to quaternary structure, the complex is composed of two ATP-binding proteins (PhnC), two transmembrane proteins (PhnE) and a solute-binding protein (PhnD).

The protein resides in the cell inner membrane. It catalyses the reaction phosphonate(out) + ATP + H2O = phosphonate(in) + ADP + phosphate + H(+). Part of the ABC transporter complex PhnCDE involved in phosphonates import. Responsible for energy coupling to the transport system. This is Phosphonates import ATP-binding protein PhnC 1 from Pseudomonas syringae pv. syringae (strain B728a).